A 352-amino-acid polypeptide reads, in one-letter code: MGCFGYLLLIIGLHQVLATYPIWWSLAVGQQYSSLGTQPIPCGTIPGLVAKQMRFCRNYMEIMPSVAEGVKIGIQECQHQFRGRRWNCTTVNDNLAIFGPVLDKATRESAFVHAIASAGVAFAVTRSCAEGSATICGCDTHHKGPPGEGWKWGGCSEDMDFGSMVSREFADARENRPDARSAMNRHNNEAGRTSILDHRHLKCKCHGLSGSCEVKTCWWSQPDFRVIGDYLKDKYDSASEMVVEKHRESRGWVETLRPKYTFFKPPIERDLIYYESSPNFCEPNPETGSFGTRDRECNVTSHGIDGCDLLCCGRGQNTRTEKRKEKCHCIFHWCCYVSCQECMRVYDVHTCK.

Positions 1–18 (MGCFGYLLLIIGLHQVLA) are cleaved as a signal peptide. Cystine bridges form between Cys77–Cys88, Cys128–Cys136, Cys138–Cys155, Cys203–Cys217, Cys205–Cys212, Cys297–Cys312, Cys327–Cys342, Cys329–Cys339, and Cys334–Cys335. Asn87 is a glycosylation site (N-linked (GlcNAc...) asparagine). Ser209 carries the O-palmitoleoyl serine lipid modification. Asn298 carries an N-linked (GlcNAc...) asparagine glycan.

This sequence belongs to the Wnt family. In terms of processing, disulfide bonds have critical and distinct roles in secretion and activity. Loss of each conserved cysteine results in high molecular weight oxidized Wnt oligomers, which are formed through inter-Wnt disulfide bonding. Post-translationally, palmitoleoylation is required for efficient binding to frizzled receptors. Depalmitoleoylation leads to Wnt signaling pathway inhibition. At neurula in anterior neural fold; at tailbud in dorsal midline of midbrain.

It is found in the secreted. The protein localises to the extracellular space. Its subcellular location is the extracellular matrix. Functionally, ligand for members of the frizzled family of seven transmembrane receptors. Functions in the canonical Wnt signaling pathway that results in activation of transcription factors of the TCF/LEF family. Required for normal embryonic mesoderm development and formation of caudal somites. Required for normal morphogenesis of the developing neural tube. This is Protein Wnt-3a (wnt3a) from Xenopus laevis (African clawed frog).